Reading from the N-terminus, the 573-residue chain is Acetolactate synthase large subunit (573 aa).

Residue E51 coordinates thiamine diphosphate. Residues R153, 261–282 (HGTLEANTAMHESDLILGIGVR), and 304–323 (DIDPTSISKNVPVAIPIVGN) each bind FAD. The interval 396-476 (QHQMFAALHY…VVIICLNNHF (81 aa)) is thiamine pyrophosphate binding. Residues D447 and N474 each contribute to the Mg(2+) site.

This sequence belongs to the TPP enzyme family. Dimer of large and small chains. Mg(2+) serves as cofactor. The cofactor is thiamine diphosphate.

It catalyses the reaction 2 pyruvate + H(+) = (2S)-2-acetolactate + CO2. Its pathway is amino-acid biosynthesis; L-isoleucine biosynthesis; L-isoleucine from 2-oxobutanoate: step 1/4. It participates in amino-acid biosynthesis; L-valine biosynthesis; L-valine from pyruvate: step 1/4. The protein is Acetolactate synthase large subunit (ilvI) of Haemophilus influenzae (strain ATCC 51907 / DSM 11121 / KW20 / Rd).